Consider the following 344-residue polypeptide: Aspartate-semialdehyde dehydrogenase (344 aa).

Residues 10 to 13 (TGQV) and 38 to 39 (RS) each bind NADP(+). A phosphate-binding site is contributed by R101. The Acyl-thioester intermediate role is filled by C131. Residue Q158 coordinates substrate. 161–162 (SG) is a binding site for NADP(+). K228 provides a ligand contact to phosphate. Residue R250 coordinates substrate. The active-site Proton acceptor is the H257. An NADP(+)-binding site is contributed by N326.

Belongs to the aspartate-semialdehyde dehydrogenase family. As to quaternary structure, homodimer.

It carries out the reaction L-aspartate 4-semialdehyde + phosphate + NADP(+) = 4-phospho-L-aspartate + NADPH + H(+). It participates in amino-acid biosynthesis; L-lysine biosynthesis via DAP pathway; (S)-tetrahydrodipicolinate from L-aspartate: step 2/4. The protein operates within amino-acid biosynthesis; L-methionine biosynthesis via de novo pathway; L-homoserine from L-aspartate: step 2/3. Its pathway is amino-acid biosynthesis; L-threonine biosynthesis; L-threonine from L-aspartate: step 2/5. Catalyzes the NADPH-dependent formation of L-aspartate-semialdehyde (L-ASA) by the reductive dephosphorylation of L-aspartyl-4-phosphate. This chain is Aspartate-semialdehyde dehydrogenase, found in Corynebacterium glutamicum (strain ATCC 13032 / DSM 20300 / JCM 1318 / BCRC 11384 / CCUG 27702 / LMG 3730 / NBRC 12168 / NCIMB 10025 / NRRL B-2784 / 534).